The following is a 165-amino-acid chain: Large ribosomal subunit protein uL10 (165 aa).

Belongs to the universal ribosomal protein uL10 family. Part of the ribosomal stalk of the 50S ribosomal subunit. The N-terminus interacts with L11 and the large rRNA to form the base of the stalk. The C-terminus forms an elongated spine to which L12 dimers bind in a sequential fashion forming a multimeric L10(L12)X complex.

In terms of biological role, forms part of the ribosomal stalk, playing a central role in the interaction of the ribosome with GTP-bound translation factors. This chain is Large ribosomal subunit protein uL10, found in Mycoplasmopsis synoviae (strain 53) (Mycoplasma synoviae).